The sequence spans 556 residues: Polypeptide N-acetylgalactosaminyltransferase 13 (556 aa).

The Cytoplasmic segment spans residues 1–4 (MRRF). A helical; Signal-anchor for type II membrane protein transmembrane segment spans residues 5 to 27 (VYCKVVLATSLMWVLVDVFLLLY). Over 28 to 556 (FSECNKCDDK…WLLRNMTLGT (529 aa)) the chain is Lumenal. N-linked (GlcNAc...) asparagine glycosylation is found at Asn-94 and Asn-116. 5 disulfide bridges follow: Cys-105–Cys-338, Cys-329–Cys-407, Cys-441–Cys-458, Cys-481–Cys-496, and Cys-522–Cys-539. Residues 114 to 224 (LPNTSVVIVF…LGWLEPLLAR (111 aa)) are catalytic subdomain A. Residues Asp-155 and Arg-185 each coordinate substrate. Mn(2+)-binding residues include Asp-208 and His-210. The catalytic subdomain B stretch occupies residues 284-346 (PVRTPTMAGG…TCSHVGHVFR (63 aa)). Trp-315 is a binding site for substrate. Mn(2+) is bound at residue His-343. Substrate is bound by residues Arg-346 and Tyr-351. Residues 428–550 (YSLGEIRNVE…GSRSQQWLLR (123 aa)) form the Ricin B-type lectin domain. Asn-551 is a glycosylation site (N-linked (GlcNAc...) asparagine).

It belongs to the glycosyltransferase 2 family. GalNAc-T subfamily. Mn(2+) serves as cofactor. Specifically expressed in neuronal cells. Expressed in fetal brain, whole adult brain, cerebral cortex and cerebellum. Not expressed in other tissues tested.

It is found in the golgi apparatus membrane. The catalysed reaction is L-seryl-[protein] + UDP-N-acetyl-alpha-D-galactosamine = a 3-O-[N-acetyl-alpha-D-galactosaminyl]-L-seryl-[protein] + UDP + H(+). The enzyme catalyses L-threonyl-[protein] + UDP-N-acetyl-alpha-D-galactosamine = a 3-O-[N-acetyl-alpha-D-galactosaminyl]-L-threonyl-[protein] + UDP + H(+). It participates in protein modification; protein glycosylation. Its function is as follows. Catalyzes the initial reaction in O-linked oligosaccharide biosynthesis, the transfer of an N-acetyl-D-galactosamine (GalNAc) residue from UDP-GalNAc to a serine or threonine residue on the protein receptor. Generates GalNAc-O-Ser/Thr structure also known as Tn antigen, which itself is immunogenic but also serves as a precursor for the synthesis of different mucin-type O-glycan core structures. Contributes to the synthesis of O-linked glycans on mucins and proteoglycans of the central nervous system. May promote neurogenesis through glycosylation and stabilization of PDPN. In terms of biological role, can glycosylate both unmodified peptides and glycopeptides that already contain an O-linked GalNAc sugar. Transfers GalNAc to Thr-/Ser-rich tandem repeats GTTPSPVPTTSTTSAP of MUC5AC, specifically on Thr-3 of non-glycosylated MUC5AC peptide, on Thr-12 and Thr-13 of preglycosylated MUC5AC at Thr-3 (MUC5AC-3), on Thr-3 of preglycosylated MUC5AC at Thr-13 (MUC5AC-13) and on Thr-12 of preglycosylated MUC5AC at Thr-3 and Thr-13 (MUC5AC-3,13). Transfers GalNAc to three consecutive serine/threonine residues on SDC3 forming a triplet-Tn epitope expressed in Purkinje cells of the developing brain. Can glycosylate both unmodified peptides and glycopeptides that already contain an O-linked GalNAc sugar. Transfers GalNAc to Thr-/Ser-rich tandem repeats GTTPSPVPTTSTTSAP of MUC5AC, specifically on Thr-3 of non-glycosylated MUC5AC peptide, on Thr-12 and Thr-13 of preglycosylated MUC5AC at Thr-3 (MUC5AC-3), on Thr-3 of preglycosylated MUC5AC at Thr-13 (MUC5AC-13) and on Thr-12 of preglycosylated MUC5AC at Thr-3 and Thr-13 (MUC5AC-3,13). The sequence is that of Polypeptide N-acetylgalactosaminyltransferase 13 (GALNT13) from Homo sapiens (Human).